The following is a 446-amino-acid chain: tRNA-2-methylthio-N(6)-dimethylallyladenosine synthase (446 aa).

The MTTase N-terminal domain occupies Lys3 to Ser120. 6 residues coordinate [4Fe-4S] cluster: Cys12, Cys49, Cys83, Cys157, Cys161, and Cys164. In terms of domain architecture, Radical SAM core spans Arg143–Glu375. The 65-residue stretch at Arg378–Asp442 folds into the TRAM domain.

This sequence belongs to the methylthiotransferase family. MiaB subfamily. Monomer. Requires [4Fe-4S] cluster as cofactor.

Its subcellular location is the cytoplasm. It carries out the reaction N(6)-dimethylallyladenosine(37) in tRNA + (sulfur carrier)-SH + AH2 + 2 S-adenosyl-L-methionine = 2-methylsulfanyl-N(6)-dimethylallyladenosine(37) in tRNA + (sulfur carrier)-H + 5'-deoxyadenosine + L-methionine + A + S-adenosyl-L-homocysteine + 2 H(+). Catalyzes the methylthiolation of N6-(dimethylallyl)adenosine (i(6)A), leading to the formation of 2-methylthio-N6-(dimethylallyl)adenosine (ms(2)i(6)A) at position 37 in tRNAs that read codons beginning with uridine. The protein is tRNA-2-methylthio-N(6)-dimethylallyladenosine synthase of Pseudomonas aeruginosa (strain UCBPP-PA14).